Reading from the N-terminus, the 232-residue chain is MIDQKVIVALDYDNQADALAFVDRIDPASCRLKVGKEMFTLFGPDFVRELHKRGFSVFLDLKFHDIPNTCSKAVRAAAELGVWMVNVHASGGERMMTASREILEPYGKDRPLLIGVTVLTSMEQSDLAGIGLDVAPQEHVIRLATLTKNSGLDGVVCSAQESSLLKNELGKEFKLVTPGIRPLGSEQGDQRRIMTPLEAVQAGSDYLVIGRPITQAVDPAAVLQAINTSLTK.

Residues D11, K33, 60-69 (DLKFHDIPNT), T120, R181, Q190, G210, and R211 contribute to the substrate site. Residue K62 is the Proton donor of the active site.

The protein belongs to the OMP decarboxylase family. Type 1 subfamily. In terms of assembly, homodimer.

The enzyme catalyses orotidine 5'-phosphate + H(+) = UMP + CO2. The protein operates within pyrimidine metabolism; UMP biosynthesis via de novo pathway; UMP from orotate: step 2/2. Catalyzes the decarboxylation of orotidine 5'-monophosphate (OMP) to uridine 5'-monophosphate (UMP). This is Orotidine 5'-phosphate decarboxylase from Vibrio vulnificus (strain CMCP6).